We begin with the raw amino-acid sequence, 231 residues long: Large ribosomal subunit protein uL1 (231 aa).

Belongs to the universal ribosomal protein uL1 family. Part of the 50S ribosomal subunit.

Its function is as follows. Binds directly to 23S rRNA. The L1 stalk is quite mobile in the ribosome, and is involved in E site tRNA release. Functionally, protein L1 is also a translational repressor protein, it controls the translation of the L11 operon by binding to its mRNA. The polypeptide is Large ribosomal subunit protein uL1 (Pseudomonas entomophila (strain L48)).